The following is a 314-amino-acid chain: MSQALRIVFAGTPEFAAEHLKALLDTPHRIVAVYTQPDRPAGRGQKLMPSAVKSLALEHGLPVMQPQSLRNAEAQAELAALRADLMVVVAYGLILPQAVLDIPRLGCINSHASLLPRWRGAAPIQRAVEAGDAESGVTVMQMEAGLDTGPMLLKVSTPISAADTGGSLHDRLAALGPKAVIEAIAGLAAGTLHGEIQDDALATYAHKLNKDEARLDWSRPAVELERQVRAFTPWPVCHTSLADAPLKVLGASLGQGSGAPGTILEASRDGLLVACGEGALRLTRLQLPGGKPLAFADLYNSRREQFAAGQVLGQ.

113 to 116 (SLLP) contributes to the (6S)-5,6,7,8-tetrahydrofolate binding site.

This sequence belongs to the Fmt family.

The enzyme catalyses L-methionyl-tRNA(fMet) + (6R)-10-formyltetrahydrofolate = N-formyl-L-methionyl-tRNA(fMet) + (6S)-5,6,7,8-tetrahydrofolate + H(+). In terms of biological role, attaches a formyl group to the free amino group of methionyl-tRNA(fMet). The formyl group appears to play a dual role in the initiator identity of N-formylmethionyl-tRNA by promoting its recognition by IF2 and preventing the misappropriation of this tRNA by the elongation apparatus. The sequence is that of Methionyl-tRNA formyltransferase from Pseudomonas aeruginosa (strain ATCC 15692 / DSM 22644 / CIP 104116 / JCM 14847 / LMG 12228 / 1C / PRS 101 / PAO1).